A 219-amino-acid polypeptide reads, in one-letter code: 3-dehydroquinate dehydratase (219 aa).

3-dehydroquinate is bound by residues Ser10, 29–31 (EVR), and Arg59. The active-site Proton donor/acceptor is His116. Lys142 (schiff-base intermediate with substrate) is an active-site residue. 3-dehydroquinate-binding residues include Arg180 and Gln203.

The protein belongs to the type-I 3-dehydroquinase family. Homodimer.

It catalyses the reaction 3-dehydroquinate = 3-dehydroshikimate + H2O. It participates in metabolic intermediate biosynthesis; chorismate biosynthesis; chorismate from D-erythrose 4-phosphate and phosphoenolpyruvate: step 3/7. Its function is as follows. Involved in the third step of the chorismate pathway, which leads to the biosynthesis of aromatic amino acids. Catalyzes the cis-dehydration of 3-dehydroquinate (DHQ) and introduces the first double bond of the aromatic ring to yield 3-dehydroshikimate. The protein is 3-dehydroquinate dehydratase of Methanocella arvoryzae (strain DSM 22066 / NBRC 105507 / MRE50).